A 294-amino-acid chain; its full sequence is Transmembrane protein 178B (294 aa).

An N-terminal signal peptide occupies residues 1 to 23 (MAAGKLLLYAGLSLSLCALGMLA). A run of 3 helical transmembrane segments spans residues 172–192 (AGFMGMAVAIILFGWIIGMLG), 206–226 (LLFLMGGTFCIISLCTCVAGI), and 252–272 (MFCAWGGLGLSLIAGFFCTLA).

It belongs to the TMEM178 family.

The protein localises to the membrane. The polypeptide is Transmembrane protein 178B (tmem178b) (Danio rerio (Zebrafish)).